Here is a 339-residue protein sequence, read N- to C-terminus: Dihydroorotase (339 aa).

Histidine 12 and histidine 14 together coordinate Zn(2+). Substrate-binding positions include 14-16 and asparagine 40; that span reads HVR. Zn(2+)-binding residues include lysine 94, histidine 133, histidine 167, and aspartate 239. Residue lysine 94 is modified to N6-carboxylysine. Position 133 (histidine 133) interacts with substrate. Aspartate 239 is a catalytic residue. Residues histidine 243 and alanine 255 each contribute to the substrate site.

It belongs to the metallo-dependent hydrolases superfamily. DHOase family. Class II DHOase subfamily. In terms of assembly, homodimer. Requires Zn(2+) as cofactor.

It carries out the reaction (S)-dihydroorotate + H2O = N-carbamoyl-L-aspartate + H(+). It participates in pyrimidine metabolism; UMP biosynthesis via de novo pathway; (S)-dihydroorotate from bicarbonate: step 3/3. In terms of biological role, catalyzes the reversible cyclization of carbamoyl aspartate to dihydroorotate. The protein is Dihydroorotase of Helicobacter pylori (strain HPAG1).